We begin with the raw amino-acid sequence, 417 residues long: Gamma-glutamyl phosphate reductase (417 aa).

The protein belongs to the gamma-glutamyl phosphate reductase family.

The protein localises to the cytoplasm. It catalyses the reaction L-glutamate 5-semialdehyde + phosphate + NADP(+) = L-glutamyl 5-phosphate + NADPH + H(+). It functions in the pathway amino-acid biosynthesis; L-proline biosynthesis; L-glutamate 5-semialdehyde from L-glutamate: step 2/2. Functionally, catalyzes the NADPH-dependent reduction of L-glutamate 5-phosphate into L-glutamate 5-semialdehyde and phosphate. The product spontaneously undergoes cyclization to form 1-pyrroline-5-carboxylate. This Aeromonas salmonicida (strain A449) protein is Gamma-glutamyl phosphate reductase.